The following is a 241-amino-acid chain: Tetrahydromethanopterin S-methyltransferase subunit A (241 aa).

The Cytoplasmic segment spans residues 1 to 220 (MAEKKEPAEG…HSGVLAGKIE (220 aa)). Position 85 (His-85) interacts with 5-hydroxybenzimidazolylcob(I)amide. The helical transmembrane segment at 221–241 (GIMVGLVLSLFVLGLLLFGGM) threads the bilayer.

It belongs to the MtrA family. The complex is composed of 8 subunits; MtrA, MtrB, MtrC, MtrD, MtrE, MtrF, MtrG and MtrH. The cofactor is 5-hydroxybenzimidazolylcob(I)amide.

The protein resides in the cell membrane. The enzyme catalyses 5-methyl-5,6,7,8-tetrahydromethanopterin + coenzyme M + 2 Na(+)(in) = 5,6,7,8-tetrahydromethanopterin + methyl-coenzyme M + 2 Na(+)(out). The protein operates within one-carbon metabolism; methanogenesis from CO(2); methyl-coenzyme M from 5,10-methylene-5,6,7,8-tetrahydromethanopterin: step 2/2. Part of a complex that catalyzes the formation of methyl-coenzyme M and tetrahydromethanopterin from coenzyme M and methyl-tetrahydromethanopterin. This is an energy-conserving, sodium-ion translocating step. In Methanohalobium evestigatum (strain ATCC BAA-1072 / DSM 3721 / NBRC 107634 / OCM 161 / Z-7303), this protein is Tetrahydromethanopterin S-methyltransferase subunit A.